We begin with the raw amino-acid sequence, 451 residues long: Alpha-galactosidase (451 aa).

5–71 serves as a coordination point for NAD(+); it reads PKITFIGAGS…ASGRITCHTN (67 aa). N151 lines the substrate pocket. C173 is a binding site for Mn(2+). H174 acts as the Proton donor in catalysis. Residue H203 coordinates Mn(2+). Residue R287 participates in substrate binding.

This sequence belongs to the glycosyl hydrolase 4 family. As to quaternary structure, homodimer. Mn(2+) serves as cofactor. NAD(+) is required as a cofactor.

The enzyme catalyses Hydrolysis of terminal, non-reducing alpha-D-galactose residues in alpha-D-galactosides, including galactose oligosaccharides, galactomannans and galactolipids.. In Salmonella typhimurium (strain LT2 / SGSC1412 / ATCC 700720), this protein is Alpha-galactosidase (melA).